Consider the following 278-residue polypeptide: Bifunctional protein FolD (278 aa).

NADP(+) is bound by residues 165-167 (GRS), Ser-190, and Thr-231.

Belongs to the tetrahydrofolate dehydrogenase/cyclohydrolase family. Homodimer.

The catalysed reaction is (6R)-5,10-methylene-5,6,7,8-tetrahydrofolate + NADP(+) = (6R)-5,10-methenyltetrahydrofolate + NADPH. It carries out the reaction (6R)-5,10-methenyltetrahydrofolate + H2O = (6R)-10-formyltetrahydrofolate + H(+). The protein operates within one-carbon metabolism; tetrahydrofolate interconversion. In terms of biological role, catalyzes the oxidation of 5,10-methylenetetrahydrofolate to 5,10-methenyltetrahydrofolate and then the hydrolysis of 5,10-methenyltetrahydrofolate to 10-formyltetrahydrofolate. This chain is Bifunctional protein FolD, found in Clostridium novyi (strain NT).